The following is a 340-amino-acid chain: Biotin synthase (340 aa).

The region spanning 56-283 is the Radical SAM core domain; that stretch reads NAVQLSTLLS…KAVVRLSAGR (228 aa). Residues cysteine 71, cysteine 75, and cysteine 78 each coordinate [4Fe-4S] cluster. Residues cysteine 115, cysteine 146, cysteine 206, and arginine 278 each coordinate [2Fe-2S] cluster.

The protein belongs to the radical SAM superfamily. Biotin synthase family. In terms of assembly, homodimer. [4Fe-4S] cluster is required as a cofactor. The cofactor is [2Fe-2S] cluster.

It catalyses the reaction (4R,5S)-dethiobiotin + (sulfur carrier)-SH + 2 reduced [2Fe-2S]-[ferredoxin] + 2 S-adenosyl-L-methionine = (sulfur carrier)-H + biotin + 2 5'-deoxyadenosine + 2 L-methionine + 2 oxidized [2Fe-2S]-[ferredoxin]. It functions in the pathway cofactor biosynthesis; biotin biosynthesis; biotin from 7,8-diaminononanoate: step 2/2. Catalyzes the conversion of dethiobiotin (DTB) to biotin by the insertion of a sulfur atom into dethiobiotin via a radical-based mechanism. The polypeptide is Biotin synthase (Burkholderia lata (strain ATCC 17760 / DSM 23089 / LMG 22485 / NCIMB 9086 / R18194 / 383)).